The following is a 129-amino-acid chain: Sm-like protein LSM4 (129 aa).

Positions 2 to 75 (LPLSLLKTAQ…IKYLRVPDEV (74 aa)) constitute a Sm domain. Residues 79–90 (VQEEKTRTDRKP) show a composition bias toward basic and acidic residues. A disordered region spans residues 79–129 (VQEEKTRTDRKPPGVGRGRGRGVDDGGARGRGRGTSMGKMGGNRGAGRGRG). Residues 111 to 129 (RGTSMGKMGGNRGAGRGRG) are compositionally biased toward gly residues.

The protein belongs to the snRNP Sm proteins family. As to quaternary structure, component of the heptameric LSM1-LSM7 complex that forms a seven-membered ring structure with a donut shape. The LSM subunits are arranged in the order LSM1, LSM2, LSM3, LSM6, LSM5, LSM7 and LSM4. LSM4 subunit interacts only with its two neighboring subunits, LSM1A or LSM1B and LSM7. Component of the heptameric LSM2-LSM8 complex that forms a seven-membered ring structure with a donut shape. The LSM subunits are arranged in the order LSM8, LSM2, LSM3, LSM6, LSM5, LSM7 and LSM4. LSM4 subunit interacts only with its two neighboring subunits, LSM8 and LSM7. Methylated by PMRT15/SKB1 in response to salt stress or abscisic acid (ABA) treatment. In terms of tissue distribution, expressed in roots, leaves, stems, flowers and siliques.

It is found in the cytoplasm. The protein resides in the nucleus. Functionally, component of LSM protein complexes, which are involved in RNA processing. Component of the cytoplasmic LSM1-LSM7 complex which is involved in mRNA degradation by promoting decapping and leading to accurate 5'-3' mRNA decay. The cytoplasmic LSM1-LSM7 complex regulates developmental gene expression by the decapping of specific development-related transcripts. Component of the nuclear LSM2-LSM8 complex which is involved splicing nuclear mRNAs. LSM2-LSM8 binds directly to the U6 small nuclear RNAs (snRNAs) and is essential for accurate splicing of selected development-related mRNAs through the stabilization of the spliceosomal U6 snRNA. Plays a critical role in the regulation of development-related gene expression. The chain is Sm-like protein LSM4 from Arabidopsis thaliana (Mouse-ear cress).